The following is a 353-amino-acid chain: Tsukushi (353 aa).

An N-terminal signal peptide occupies residues 1 to 16 (MPWPLLLLLAVSGAQT). An LRRNT domain is found at 17-58 (TRPCFPGCQCEVETFGLFDSFSLTRVDCSGLGPHIMPVPIPL). LRR repeat units follow at residues 59-80 (DTAH…VLAG), 85-106 (TLAG…AFSR), 109-130 (YLES…SFTS), 132-153 (PLSD…AFTT), 159-179 (ALHV…PTRA), 185-206 (TIQS…RDLP), 207-227 (LRYL…AFAG), 230-249 (GLTH…APSG), 255-276 (GLQV…EVFS), and 280-301 (SLQE…LLLH). An N-linked (GlcNAc...) asparagine glycan is attached at Asn74. Asn137 carries N-linked (GlcNAc...) asparagine glycosylation.

Interacts with FZD4 (via FZ domain); competes with WNT2B for binding to FZD4, inhibiting Wnt signaling and repressing peripheral eye development. Interacts with TGFB1; the interaction contributes to regulation of the hair cycle. Interacts with netrin. Interacts with CCN2.

It localises to the secreted. Its function is as follows. Contributes to various developmental events and other processes such as wound healing and cholesterol homeostasis through its interactions with multiple signaling pathways. Wnt signaling inhibitor which competes with WNT2B for binding to Wnt receptor FZD4 and represses WNT2B-dependent development of the peripheral eye. Plays a role in regulating the hair cycle by controlling TGFB1 signaling. Required for the development of the anterior commissure in the brain by inhibiting neurite outgrowth. Essential for terminal differentiation of hippocampal neural stem cells. Plays a role in regulating bone elongation and bone mass by modulating growth plate chondrocyte function and overall body size. Required for development of the inner ear through its involvement in stereocilia formation in inner hair cells. Facilitates wound healing by inhibiting secretion of TGFB1 from macrophages which prevents myofibroblast differentiation, maintaining inflammatory cell quiescence. Plays a role in cholesterol homeostasis by reducing circulating high-density lipoprotein cholesterol, lowering cholesterol efflux capacity and decreasing cholesterol-to-bile acid conversion in the liver. In one study, shown to negatively regulate sympathetic innervation in brown fat, leading to reduced energy expenditure. In another study, shown not to affect brown fat thermogenic capacity, body weight gain or glucose homeostasis. In Homo sapiens (Human), this protein is Tsukushi (TSKU).